The sequence spans 1429 residues: DNA-directed RNA polymerase subunit beta' (1429 aa).

4 residues coordinate Zn(2+): cysteine 68, cysteine 70, cysteine 83, and cysteine 86. Mg(2+) is bound by residues aspartate 459, aspartate 461, and aspartate 463. Residues cysteine 805, cysteine 879, cysteine 886, and cysteine 889 each coordinate Zn(2+). A disordered region spans residues glutamate 1407–glutamate 1429. Positions alanine 1419–glutamate 1429 are enriched in polar residues.

It belongs to the RNA polymerase beta' chain family. In terms of assembly, the RNAP catalytic core consists of 2 alpha, 1 beta, 1 beta' and 1 omega subunit. When a sigma factor is associated with the core the holoenzyme is formed, which can initiate transcription. Mg(2+) is required as a cofactor. Requires Zn(2+) as cofactor.

The enzyme catalyses RNA(n) + a ribonucleoside 5'-triphosphate = RNA(n+1) + diphosphate. In terms of biological role, DNA-dependent RNA polymerase catalyzes the transcription of DNA into RNA using the four ribonucleoside triphosphates as substrates. The protein is DNA-directed RNA polymerase subunit beta' of Rhodopirellula baltica (strain DSM 10527 / NCIMB 13988 / SH1).